The chain runs to 151 residues: 3-dehydroquinate dehydratase 1 (151 aa).

Tyrosine 24 (proton acceptor) is an active-site residue. 3 residues coordinate substrate: asparagine 75, histidine 81, and aspartate 88. Histidine 101 (proton donor) is an active-site residue. Substrate contacts are provided by residues 102 to 103 (IS) and arginine 112.

It belongs to the type-II 3-dehydroquinase family. As to quaternary structure, homododecamer.

It carries out the reaction 3-dehydroquinate = 3-dehydroshikimate + H2O. Its pathway is metabolic intermediate biosynthesis; chorismate biosynthesis; chorismate from D-erythrose 4-phosphate and phosphoenolpyruvate: step 3/7. Catalyzes a trans-dehydration via an enolate intermediate. The sequence is that of 3-dehydroquinate dehydratase 1 (aroQ1) from Corynebacterium efficiens (strain DSM 44549 / YS-314 / AJ 12310 / JCM 11189 / NBRC 100395).